Here is a 607-residue protein sequence, read N- to C-terminus: Phosphomethylpyrimidine synthase (607 aa).

Substrate is bound by residues Asn-216, Met-245, Tyr-274, His-310, 330 to 332 (SRG), 371 to 374 (DGLR), and Glu-410. Residue His-414 coordinates Zn(2+). Tyr-437 serves as a coordination point for substrate. Zn(2+) is bound at residue His-478. Cys-558, Cys-561, and Cys-566 together coordinate [4Fe-4S] cluster.

It belongs to the ThiC family. As to quaternary structure, homodimer. The cofactor is [4Fe-4S] cluster.

The catalysed reaction is 5-amino-1-(5-phospho-beta-D-ribosyl)imidazole + S-adenosyl-L-methionine = 4-amino-2-methyl-5-(phosphooxymethyl)pyrimidine + CO + 5'-deoxyadenosine + formate + L-methionine + 3 H(+). The protein operates within cofactor biosynthesis; thiamine diphosphate biosynthesis. Its function is as follows. Catalyzes the synthesis of the hydroxymethylpyrimidine phosphate (HMP-P) moiety of thiamine from aminoimidazole ribotide (AIR) in a radical S-adenosyl-L-methionine (SAM)-dependent reaction. The sequence is that of Phosphomethylpyrimidine synthase from Agrobacterium fabrum (strain C58 / ATCC 33970) (Agrobacterium tumefaciens (strain C58)).